The chain runs to 331 residues: FMRFamide-related neuropeptides (331 aa).

Residues 1–25 (MRCWSPCSLLVVIAIYCLSSHTSEA) form the signal peptide. Residues 26–65 (FDLAQACVESQRLSLLPICDTIFAVQQEGAQQSADDGLRS) constitute a propeptide that is removed on maturation. Phenylalanine 71 and phenylalanine 83 each carry phenylalanine amide. A propeptide spanning residues 86-94 (NVPDLPFED) is cleaved from the precursor. Phenylalanine 100 is subject to Phenylalanine amide. Residues 103-168 (AAPQLDDLLK…YVDDVEDSDV (66 aa)) constitute a propeptide that is removed on maturation. The segment at 122–153 (QKSDDTSVRRKRSTDAAPQSNTDSAEQKNDSA) is disordered. Residues phenylalanine 174 and phenylalanine 181 each carry the phenylalanine amide modification. Residues 184-194 (NPSDVGSKLTE) constitute a propeptide that is removed on maturation. Phenylalanine 200 carries the phenylalanine amide modification. Residues 203-205 (DPE) constitute a propeptide that is removed on maturation. Phenylalanine 211 carries the post-translational modification Phenylalanine amide. Positions 214 to 216 (SDD) are excised as a propeptide. Phenylalanine 222 is modified (phenylalanine amide). A propeptide spanning residues 225–236 (NPGDAEDELEED) is cleaved from the precursor. Phenylalanine amide is present on phenylalanine 242. The propeptide occupies 245–254 (GDEEDEEEAE). Phenylalanine 260 bears the Phenylalanine amide mark. A propeptide spanning residues 263–265 (DPE) is cleaved from the precursor. Position 271 is a phenylalanine amide (phenylalanine 271). A propeptide spanning residues 274-277 (NGEE) is cleaved from the precursor. Phenylalanine 283 bears the Phenylalanine amide mark. Positions 286–293 (NPEEPEAD) are excised as a propeptide. A Phenylalanine amide modification is found at phenylalanine 299. Residues 302-312 (GGEEDDVNTEE) constitute a propeptide that is removed on maturation. Phenylalanine amide is present on phenylalanine 318. A propeptide spanning residues 321 to 331 (SAEKCKGCLEG) is cleaved from the precursor.

Belongs to the FARP (FMRFamide related peptide) family. Present ubiquitously in the brain and regions of the central nervous system as well as in the periphery and throughout the dermal chromatophore layer (at protein level).

Its subcellular location is the secreted. Functionally, excitatory neurotransmitters that directly modulate chromatophore function by activating chromatophore expansion at the chromatophore neuromuscular junction. This is FMRFamide-related neuropeptides from Sepia officinalis (Common cuttlefish).